A 385-amino-acid chain; its full sequence is Acetylornithine aminotransferase (385 aa).

Pyridoxal 5'-phosphate contacts are provided by residues 95–96 (GA) and F122. R125 lines the N(2)-acetyl-L-ornithine pocket. Position 208–211 (208–211 (DEIQ)) interacts with pyridoxal 5'-phosphate. K237 is modified (N6-(pyridoxal phosphate)lysine). Residue T265 coordinates N(2)-acetyl-L-ornithine. Residue T266 participates in pyridoxal 5'-phosphate binding.

It belongs to the class-III pyridoxal-phosphate-dependent aminotransferase family. ArgD subfamily. As to quaternary structure, homodimer. It depends on pyridoxal 5'-phosphate as a cofactor.

It is found in the cytoplasm. It catalyses the reaction N(2)-acetyl-L-ornithine + 2-oxoglutarate = N-acetyl-L-glutamate 5-semialdehyde + L-glutamate. The protein operates within amino-acid biosynthesis; L-arginine biosynthesis; N(2)-acetyl-L-ornithine from L-glutamate: step 4/4. This chain is Acetylornithine aminotransferase, found in Bacillus subtilis (strain 168).